We begin with the raw amino-acid sequence, 227 residues long: PKHD-type hydroxylase PHZ_c0292 (227 aa).

In terms of domain architecture, Fe2OG dioxygenase spans 78-178 (VVFPPLFNRY…RVCSFFWIQS (101 aa)). Fe cation contacts are provided by His96, Asp98, and His159. Position 169 (Arg169) interacts with 2-oxoglutarate.

Fe(2+) serves as cofactor. The cofactor is L-ascorbate.

The protein is PKHD-type hydroxylase PHZ_c0292 of Phenylobacterium zucineum (strain HLK1).